The following is a 119-amino-acid chain: Large ribosomal subunit protein uL18 (119 aa).

It belongs to the universal ribosomal protein uL18 family. Part of the 50S ribosomal subunit; part of the 5S rRNA/L5/L18/L25 subcomplex. Contacts the 5S and 23S rRNAs.

Functionally, this is one of the proteins that bind and probably mediate the attachment of the 5S RNA into the large ribosomal subunit, where it forms part of the central protuberance. This Borrelia hermsii (strain HS1 / DAH) protein is Large ribosomal subunit protein uL18.